A 585-amino-acid chain; its full sequence is ATP-dependent RNA helicase DBP3 (585 aa).

The segment at 1–124 is disordered; that stretch reads MTTSATEKAL…SSSASAASFT (124 aa). The segment covering 26–43 has biased composition (low complexity); that stretch reads AKAAAAAGASASTSLEGS. 2 stretches are compositionally biased toward basic residues: residues 52–64 and 79–93; these read KDKK…KDKK and AKKR…KKAA. A compositionally biased stretch (low complexity) spans 94 to 124; the sequence is AKSGAATSLESTPAASPAPAASSSASAASFT. The Q motif motif lies at 159-187; it reads FRELDGKVDAAVKKTLDSQGFSTPTPIQA. The Helicase ATP-binding domain maps to 190 to 377; the sequence is WPVLLQNKDV…ESFMNGPVRV (188 aa). Residue 203–210 coordinates ATP; sequence AETGSGKT. The DEAD box signature appears at 322–325; sequence DEAD. The 149-residue stretch at 406–554 folds into the Helicase C-terminal domain; sequence RLNDFLRSVN…KVPDALTKFP (149 aa).

It belongs to the DEAD box helicase family. DDX5/DBP2 subfamily.

It localises to the nucleus. Its subcellular location is the nucleolus. It carries out the reaction ATP + H2O = ADP + phosphate + H(+). Its function is as follows. ATP-dependent RNA helicase required for 60S ribosomal subunit synthesis. Involved in efficient pre-rRNA processing, predominantly at site A3, which is necessary for the normal formation of 25S and 5.8S rRNAs. This is ATP-dependent RNA helicase DBP3 (DBP3) from Mycosarcoma maydis (Corn smut fungus).